Consider the following 311-residue polypeptide: Phosphoribosylamine--glycine ligase (311 aa).

Positions 1 to 191 (DPRVRKQYIQ…LVQVLLAACR (191 aa)) constitute an ATP-grasp domain.

This sequence belongs to the GARS family.

The protein resides in the plastid. It is found in the chloroplast. The catalysed reaction is 5-phospho-beta-D-ribosylamine + glycine + ATP = N(1)-(5-phospho-beta-D-ribosyl)glycinamide + ADP + phosphate + H(+). The protein operates within purine metabolism; IMP biosynthesis via de novo pathway; N(1)-(5-phospho-D-ribosyl)glycinamide from 5-phospho-alpha-D-ribose 1-diphosphate: step 2/2. This chain is Phosphoribosylamine--glycine ligase (PUR2), found in Vigna unguiculata (Cowpea).